A 142-amino-acid polypeptide reads, in one-letter code: Transcriptional regulator MraZ (142 aa).

SpoVT-AbrB domains lie at 5 to 47 and 76 to 119; these read THTP…PAPE and AHDE…DRVA.

This sequence belongs to the MraZ family. In terms of assembly, forms oligomers.

It localises to the cytoplasm. The protein resides in the nucleoid. The protein is Transcriptional regulator MraZ of Salinispora arenicola (strain CNS-205).